The following is a 325-amino-acid chain: MMPNVAPNSYYLNIPNANSTSTTTSSIFSDLNKEYESKIKEIEEYYIKTLLNENTDNDDSSSSEGHNINETDILSEYSPRPSPWLPSKPNCYHPLGDFKDLIISDSRPTNTLPINNPFAGNNNISTLATTEKKRKKRSLEVEINPTYTTSAFSLPLTAENLQKLSQVDSQSTGLPYTLPIQKTTKLEPCRRAPLQLPQLVNKTLYKTELCESFTIKGYCKYGNKCQFAHGLNELKFKKKSNNYRTKPCINWSKLGYCPYGKRCCFKHGDDKDVEIYQNANDGRSKDTALTPLPTSLAPSNNDNITNLSKPRNLHTSVKALQRMTW.

2 consecutive C3H1-type zinc fingers follow at residues 204 to 232 (LYKT…HGLN) and 242 to 270 (NYRT…HGDD). Residues 284–306 (SKDTALTPLPTSLAPSNNDNITN) form a disordered region. The segment covering 292-306 (LPTSLAPSNNDNITN) has biased composition (polar residues).

Functionally, binds to specific AU-rich elements (ARE) in the 3'-untranslated region of target mRNAs and promotes their degradation. In response to iron deficiency, promotes the decay of many mRNAs encoding proteins involved in iron-dependent pathways. Negatively regulates primarily iron-dependent mitochondrial processes including respiration and amino acid biosynthesis. The polypeptide is mRNA decay factor CTH1 (CTH1) (Saccharomyces cerevisiae (strain ATCC 204508 / S288c) (Baker's yeast)).